Reading from the N-terminus, the 645-residue chain is Putative galactocerebrosidase (645 aa).

The N-terminal stretch at 1–16 is a signal peptide; the sequence is MFSIFIKIILILPSIA. Threonine 87 and tryptophan 128 together coordinate substrate. Asparagine 141 carries N-linked (GlcNAc...) asparagine glycosylation. Asparagine 171 contributes to the substrate binding site. The active-site Proton donor/acceptor is the glutamate 172. N-linked (GlcNAc...) asparagine glycosylation is found at asparagine 174 and asparagine 193. Glutamate 248 functions as the Nucleophile in the catalytic mechanism. Cysteine 261 and cysteine 365 are disulfide-bonded. Asparagine 274, asparagine 395, asparagine 411, asparagine 532, asparagine 616, asparagine 620, and asparagine 638 each carry an N-linked (GlcNAc...) asparagine glycan.

The protein belongs to the glycosyl hydrolase 59 family.

The enzyme catalyses a beta-D-Gal-(1&lt;-&gt;1')-ceramide + H2O = an N-acyl-sphingoid base + D-galactose. The catalysed reaction is a beta-D-galactosyl-(1&lt;-&gt;1')-N-acylsphing-4-enine + H2O = an N-acylsphing-4-enine + D-galactose. In terms of biological role, hydrolyzes the galactose ester bonds of galactosylceramide, galactosylsphingoid base, lactosylceramide, and monogalactosyldiglyceride. C.elegans contain specific sphingoid bases, which are unique or different in structure compared to the sphingoid bases found in other animals. Two examples of these distinctive compounds are: 15-methylhexadecasphinganine and 15-methylhexadecasphing-4-enine. This chain is Putative galactocerebrosidase, found in Caenorhabditis elegans.